Here is a 471-residue protein sequence, read N- to C-terminus: Intraflagellar transport protein 46 homolog (471 aa).

Disordered stretches follow at residues Met1–Arg202 and Ser226–Asp246. Acidic residues-rich tracts occupy residues Ser89 to Asp99 and Asp231 to Asp246.

Belongs to the IFT46 family. Component of the IFT complex B composed of at least che-2, che-13, dyf-1, dyf-3, dyf-6, dyf-11, dyf-13, ift-20, ift-74, ift-81, ifta-2, osm-1, osm-5 and osm-6. In terms of tissue distribution, expressed in the hypodermis and sensory neurons including inner labial, PDE, amphid and phasmid neurons.

The protein resides in the cell projection. Its subcellular location is the cilium. The protein localises to the cytoplasm. It is found in the cytoskeleton. It localises to the cilium basal body. The protein resides in the dendrite. Its subcellular location is the perikaryon. In terms of biological role, component of the intraflagellar transport (IFT) complex B required for transport of proteins in the motile cilium. May be required for ciliary entrance and transport of specific ciliary cargo proteins such as che-3 which are related to motility. Required for normal morphology and function of ciliated amphid sensory neurons. This chain is Intraflagellar transport protein 46 homolog, found in Caenorhabditis elegans.